An 83-amino-acid polypeptide reads, in one-letter code: Exodeoxyribonuclease 7 small subunit (83 aa).

It belongs to the XseB family. As to quaternary structure, heterooligomer composed of large and small subunits.

Its subcellular location is the cytoplasm. The enzyme catalyses Exonucleolytic cleavage in either 5'- to 3'- or 3'- to 5'-direction to yield nucleoside 5'-phosphates.. Functionally, bidirectionally degrades single-stranded DNA into large acid-insoluble oligonucleotides, which are then degraded further into small acid-soluble oligonucleotides. This is Exodeoxyribonuclease 7 small subunit from Rhizobium leguminosarum bv. trifolii (strain WSM2304).